A 457-amino-acid polypeptide reads, in one-letter code: UPF0328 protein ECU05_0030 (457 aa).

2 disordered regions span residues 1 to 112 (MPRP…PTAT) and 157 to 183 (VKSQ…NPRI). The span at 74 to 94 (HTEGCHTHEANPEPNTKHTET) shows a compositional bias: basic and acidic residues. The span at 102–112 (CPPPHPGPTAT) shows a compositional bias: pro residues.

It belongs to the UPF0328 family.

The protein is UPF0328 protein ECU05_0030 of Encephalitozoon cuniculi (strain GB-M1) (Microsporidian parasite).